The sequence spans 307 residues: Ornithine carbamoyltransferase (307 aa).

Carbamoyl phosphate contacts are provided by residues 50-53, glutamine 77, arginine 101, and 128-131; these read STRT and HPCQ. Residues asparagine 160, aspartate 224, and 228–229 contribute to the L-ornithine site; that span reads SM. Carbamoyl phosphate-binding positions include 264–265 and arginine 292; that span reads CL.

Belongs to the aspartate/ornithine carbamoyltransferase superfamily. OTCase family.

The protein resides in the cytoplasm. The enzyme catalyses carbamoyl phosphate + L-ornithine = L-citrulline + phosphate + H(+). It functions in the pathway amino-acid biosynthesis; L-arginine biosynthesis; L-arginine from L-ornithine and carbamoyl phosphate: step 1/3. Its function is as follows. Reversibly catalyzes the transfer of the carbamoyl group from carbamoyl phosphate (CP) to the N(epsilon) atom of ornithine (ORN) to produce L-citrulline. This chain is Ornithine carbamoyltransferase, found in Mycolicibacterium gilvum (strain PYR-GCK) (Mycobacterium gilvum (strain PYR-GCK)).